A 478-amino-acid polypeptide reads, in one-letter code: Microfibrillar-associated protein 1 (478 aa).

Over residues methionine 1–isoleucine 20 the composition is skewed to low complexity. 2 disordered regions span residues methionine 1–threonine 276 and asparagine 456–glutamate 478. The span at serine 53–phenylalanine 62 shows a compositional bias: acidic residues. The segment covering aspartate 107–arginine 128 has biased composition (basic and acidic residues). The segment covering isoleucine 140 to glycine 153 has biased composition (acidic residues). Residues arginine 160–glutamate 170 are compositionally biased toward polar residues. Residues serine 171–glutamate 181 are compositionally biased toward acidic residues. Residues glutamine 197 to glutamate 212 show a composition bias toward basic and acidic residues. A compositionally biased stretch (acidic residues) spans serine 214–asparagine 231. The interaction with Prp38 stretch occupies residues glutamate 229 to glutamate 478. Residues arginine 245 to alanine 268 show a composition bias toward basic and acidic residues.

Belongs to the MFAP1 family. As to quaternary structure, component of the spliceosome B complex. Interacts (via C-terminus) with Prp38.

It localises to the nucleus. Required for pre-mRNA splicing. This chain is Microfibrillar-associated protein 1, found in Drosophila melanogaster (Fruit fly).